Here is a 64-residue protein sequence, read N- to C-terminus: Large ribosomal subunit protein bL32 (64 aa).

A compositionally biased stretch (basic residues) spans 1-16 (MAVPKHRKSKAKKRSR). The interval 1 to 22 (MAVPKHRKSKAKKRSRQAANDK) is disordered.

The protein belongs to the bacterial ribosomal protein bL32 family.

In Brachyspira hyodysenteriae (strain ATCC 49526 / WA1), this protein is Large ribosomal subunit protein bL32.